Here is a 392-residue protein sequence, read N- to C-terminus: DNA replication and repair protein RecF (392 aa).

An ATP-binding site is contributed by 30 to 37; sequence GPNAAGKT.

Belongs to the RecF family.

It localises to the cytoplasm. In terms of biological role, the RecF protein is involved in DNA metabolism; it is required for DNA replication and normal SOS inducibility. RecF binds preferentially to single-stranded, linear DNA. It also seems to bind ATP. The chain is DNA replication and repair protein RecF from Chloroflexus aggregans (strain MD-66 / DSM 9485).